A 185-amino-acid polypeptide reads, in one-letter code: Ribosome-recycling factor (185 aa).

It belongs to the RRF family.

The protein localises to the cytoplasm. Functionally, responsible for the release of ribosomes from messenger RNA at the termination of protein biosynthesis. May increase the efficiency of translation by recycling ribosomes from one round of translation to another. This is Ribosome-recycling factor from Shewanella loihica (strain ATCC BAA-1088 / PV-4).